Consider the following 525-residue polypeptide: Glucans biosynthesis protein G (525 aa).

The N-terminal stretch at 1–35 is a signal peptide; the sequence is MIFRSVSNTDFRARVRTLLLAGSTALAFVAAPVWA.

Belongs to the OpgD/OpgG family.

The protein resides in the periplasm. Its pathway is glycan metabolism; osmoregulated periplasmic glucan (OPG) biosynthesis. Functionally, involved in the biosynthesis of osmoregulated periplasmic glucans (OPGs). The protein is Glucans biosynthesis protein G of Pseudomonas paraeruginosa (strain DSM 24068 / PA7) (Pseudomonas aeruginosa (strain PA7)).